The following is an 819-amino-acid chain: Advillin (819 aa).

Residues 1–731 are core; that stretch reads MSLSSAFRAV…YEQLKNELGD (731 aa). Residues 24–73 form a Gelsolin-like 1 repeat; the sequence is MELALVPLSAHGNFYEGDCYIVLSTRRVGSLLSQNIHFWIGKDSSQDEQS. Tyr-85 is modified (phosphotyrosine). Residues 109 to 116 and 135 to 143 contribute to the a 1,2-diacyl-sn-glycero-3-phospho-(1D-myo-inositol-4,5-bisphosphate) site; these read KQGIIYKK and RLLHVKGKR. Gelsolin-like repeat units lie at residues 145–185, 262–306, 403–454, 525–565, and 628–669; these read IQAT…GERL, LSVT…VEKQ, ENLE…DELA, TKAV…DERA, and FLVT…TEKK. Residues 628–819 form a required for interaction with F-actin region; it reads FLVTEVTDFT…LQLKKERGLF (192 aa). Positions 732-819 are headpiece; the sequence is ATAIVRITAD…LQLKKERGLF (88 aa). Phosphotyrosine occurs at positions 748 and 758. One can recognise an HP domain in the interval 753-819; sequence DGEPKYYPVE…LQLKKERGLF (67 aa).

Belongs to the villin/gelsolin family. Associates (via C-terminus) with actin. Interacts with F-actin. Interacts with SCARF1; the interaction occurs in embryonic dorsal root ganglions at 18 dpc and induces neurite-like outgrowth. Interacts with PLCE1. Interacts with ACTR2 and ACTR3; associates with the ARP2/3 complex. Most highly expressed in the endometrium of the uterus, the intestinal villi and the testes. Weaker expression also detected in the brain, dorsal root ganglions and on the surface of the tongue.

The protein localises to the cytoplasm. It is found in the cytoskeleton. Its subcellular location is the cell projection. It localises to the lamellipodium. The protein resides in the cell junction. The protein localises to the focal adhesion. It is found in the neuron projection. Its subcellular location is the axon. Its function is as follows. Ca(2+)-regulated actin-binding protein which plays an important role in actin bundling. May have a unique function in the morphogenesis of neuronal cells which form ganglia. Required for SREC1-mediated regulation of neurite-like outgrowth. Plays a role in regenerative sensory axon outgrowth and remodeling processes after peripheral injury in neonates. Involved in the formation of long fine actin-containing filopodia-like structures in fibroblast. Plays a role in ciliogenesis. In podocytes, controls lamellipodia formation through the regulation of EGF-induced diacylglycerol generation by PLCE1 and ARP2/3 complex assembly. The chain is Advillin from Mus musculus (Mouse).